Reading from the N-terminus, the 73-residue chain is DNA-directed RNA polymerase subunit omega (73 aa).

It belongs to the RNA polymerase subunit omega family. The RNAP catalytic core consists of 2 alpha, 1 beta, 1 beta' and 1 omega subunit. When a sigma factor is associated with the core the holoenzyme is formed, which can initiate transcription.

The catalysed reaction is RNA(n) + a ribonucleoside 5'-triphosphate = RNA(n+1) + diphosphate. In terms of biological role, promotes RNA polymerase assembly. Latches the N- and C-terminal regions of the beta' subunit thereby facilitating its interaction with the beta and alpha subunits. The chain is DNA-directed RNA polymerase subunit omega from Lactobacillus delbrueckii subsp. bulgaricus (strain ATCC BAA-365 / Lb-18).